The sequence spans 137 residues: Small ribosomal subunit protein bS16 (137 aa).

Composition is skewed to basic and acidic residues over residues 80–99 and 111–125; these read KSPE…KRLQ and VATE…KEAP. A disordered region spans residues 80 to 137; the sequence is KSPEEAQKGGMRKGEFKRLQAEQAAKAQKKAVATEEPKAEEAKEAPPAESQAAEGKEE. Residues 126–137 are compositionally biased toward low complexity; it reads PAESQAAEGKEE.

It belongs to the bacterial ribosomal protein bS16 family.

The chain is Small ribosomal subunit protein bS16 from Coxiella burnetii (strain Dugway 5J108-111).